Here is a 185-residue protein sequence, read N- to C-terminus: Gastrokine-1 (185 aa).

Positions 1 to 20 (MKFTIAFAGLLGVFLTPALA) are cleaved as a signal peptide. Residues 54–150 (NNGWNSWNAL…MCKGIPTYMA (97 aa)) enclose the BRICHOS domain. Cys-81 and Cys-142 are oxidised to a cystine.

Belongs to the gastrokine family. As to expression, highly expressed specifically in surface cells of the antrum mucosa from where it is secreted.

It localises to the secreted. The protein resides in the cytoplasmic granule. It is found in the golgi apparatus. In terms of biological role, has mitogenic activity and may be involved in maintaining the integrity of the gastric mucosal epithelium. The protein is Gastrokine-1 (GKN1) of Sus scrofa (Pig).